The primary structure comprises 465 residues: DEAD-box ATP-dependent RNA helicase 55 (465 aa).

Positions 17-45 (FSELKPPLSEDIIEALDRSGFEVCTPVQA) match the Q motif motif. The Helicase ATP-binding domain maps to 48-219 (IPFLCSHKDV…KAGLRNPYLK (172 aa)). Residue 61–68 (AATGSGKT) coordinates ATP. The DEAD box motif lies at 167-170 (DEAD). Residues 228-422 (QLVHLLIENK…KDKLQQEKRG (195 aa)) enclose the Helicase C-terminal domain. Residues 413–465 (KDKLQQEKRGKRKKSSKEAVDDSNKASRKRKLTGRQRQTIQTAQDEEEMNLRL) form a disordered region. Residues 428-437 (SKEAVDDSNK) are compositionally biased toward basic and acidic residues. A compositionally biased stretch (acidic residues) spans 456-465 (QDEEEMNLRL).

Belongs to the DEAD box helicase family. DDX55/SPB4 subfamily.

The catalysed reaction is ATP + H2O = ADP + phosphate + H(+). This is DEAD-box ATP-dependent RNA helicase 55 (RH55) from Arabidopsis thaliana (Mouse-ear cress).